A 256-amino-acid chain; its full sequence is DNA repair protein RecO (256 aa).

This sequence belongs to the RecO family.

Functionally, involved in DNA repair and RecF pathway recombination. The chain is DNA repair protein RecO from Rhizobium etli (strain ATCC 51251 / DSM 11541 / JCM 21823 / NBRC 15573 / CFN 42).